Reading from the N-terminus, the 218-residue chain is N-(5'-phosphoribosyl)anthranilate isomerase (218 aa).

It belongs to the TrpF family.

The enzyme catalyses N-(5-phospho-beta-D-ribosyl)anthranilate = 1-(2-carboxyphenylamino)-1-deoxy-D-ribulose 5-phosphate. The protein operates within amino-acid biosynthesis; L-tryptophan biosynthesis; L-tryptophan from chorismate: step 3/5. The polypeptide is N-(5'-phosphoribosyl)anthranilate isomerase (Bacillus licheniformis (strain ATCC 14580 / DSM 13 / JCM 2505 / CCUG 7422 / NBRC 12200 / NCIMB 9375 / NCTC 10341 / NRRL NRS-1264 / Gibson 46)).